A 154-amino-acid polypeptide reads, in one-letter code: Ribosome maturation factor RimP (154 aa).

This sequence belongs to the RimP family.

The protein localises to the cytoplasm. Required for maturation of 30S ribosomal subunits. In Clostridium kluyveri (strain ATCC 8527 / DSM 555 / NBRC 12016 / NCIMB 10680 / K1), this protein is Ribosome maturation factor RimP.